The following is a 137-amino-acid chain: Putative nickel-responsive regulator (137 aa).

Residues His-79, His-90, His-92, and Cys-98 each contribute to the Ni(2+) site.

The protein belongs to the transcriptional regulatory CopG/NikR family. Ni(2+) is required as a cofactor.

Functionally, transcriptional regulator. The chain is Putative nickel-responsive regulator from Campylobacter concisus (strain 13826).